The chain runs to 504 residues: ADP,ATP carrier protein 3 (504 aa).

A run of 12 helical transmembrane segments spans residues 23 to 43 (LKLF…FGAL), 59 to 79 (IISF…TILY), 90 to 110 (YVFY…AYII), 146 to 166 (YGLM…LMFW), 183 to 203 (PVLG…LVFF), 230 to 250 (EMLQ…MLLF), 296 to 316 (IALL…PWKA), 329 to 349 (VHFM…FMII), 364 to 384 (LLTP…IIFI), 386 to 406 (EIGS…VGAI), 449 to 469 (FGKS…PTAT), and 473 to 493 (IIIY…WDVV).

This sequence belongs to the ADP/ATP translocase tlc family.

The protein localises to the cell membrane. In terms of biological role, provides the rickettsial cell with host ATP in exchange for rickettsial ADP. This is an obligate exchange system. This energy acquiring activity is an important component of rickettsial parasitism. In Rickettsia bellii (strain RML369-C), this protein is ADP,ATP carrier protein 3 (tlcC).